A 91-amino-acid chain; its full sequence is Large ribosomal subunit protein eL34 (91 aa).

The segment at 48-69 (RGRPVEMRKLPKTKKRPERPMP) is disordered.

The protein belongs to the eukaryotic ribosomal protein eL34 family.

The chain is Large ribosomal subunit protein eL34 (rpl34e) from Pyrococcus horikoshii (strain ATCC 700860 / DSM 12428 / JCM 9974 / NBRC 100139 / OT-3).